The sequence spans 616 residues: DNA-binding protein RFX5 (616 aa).

A disordered region spans residues 1 to 29; the sequence is MAEDEPDAKSPKTGGRAPPGGAEAGEPTT. Position 2 is an N-acetylalanine (Ala2). Position 10 is a phosphoserine (Ser10). Low complexity predominate over residues 13-29; it reads TGGRAPPGGAEAGEPTT. An N-terminal domain region spans residues 25–90; it reads GEPTTLLQRL…PSTLSNEEYM (66 aa). The leucine-rich region; critical for dimer formation and for interaction with RFXAP stretch occupies residues 62 to 66; the sequence is LYLYL. The RFX-type winged-helix DNA-binding region spans 92–168; the sequence is AYRWIRNHLE…YCYSGIRRKT (77 aa). The PxLPxI/L motif; mediates interaction with RFXANK motif lies at 173–178; the sequence is PPLPGL. Ser185 bears the Phosphoserine mark. 2 disordered regions span residues 252–314 and 391–616; these read AEED…ESSA and LPGP…ATPP. The segment covering 276–293 has biased composition (basic and acidic residues); it reads GAHKKPERLAQPPKDLEA. The segment covering 391–401 has biased composition (pro residues); it reads LPGPGPGPGRA. Basic and acidic residues predominate over residues 424 to 434; that stretch reads GPHDKGVKRTA. The segment covering 463-473 has biased composition (basic residues); the sequence is KRKRGRPRKKS. The span at 534–546 shows a compositional bias: gly residues; it reads QGDGTVSKGGRGP. A compositionally biased stretch (basic and acidic residues) spans 606–616; sequence QEHKDPKATPP.

It belongs to the RFX family. As to quaternary structure, homodimer. The RFX heterotetrameric complex consists of 2 molecules of RFX5 and one each of RFXAP and RFX-B/RFXANK; with each subunit representing a separate complementation group. Interacts (via PxLPxI/L motif) with RFXANK (via ankyrin repeats); the interaction is direct. RFX forms cooperative DNA binding complexes with X2BP and CBF/NF-Y. RFX associates with CIITA to form an active transcriptional complex. Phosphorylated. As to expression, ubiquitous.

Its subcellular location is the nucleus. In terms of biological role, activates transcription from class II MHC promoters. Recognizes X-boxes. Mediates cooperative binding between RFX and NF-Y. RFX binds the X1 box of MHC-II promoters. This is DNA-binding protein RFX5 (RFX5) from Homo sapiens (Human).